The primary structure comprises 628 residues: Phomenoic acid biosynthesis cluster MFS-type transporter (628 aa).

Transmembrane regions (helical) follow at residues 102–122, 150–170, 174–194, 204–224, 232–252, 262–282, 302–322, 329–349, 375–395, 407–427, 435–455, 488–508, 524–544, and 595–615; these read IHGF…FLYA, VGFV…YGIL, WLYI…GAAP, VFAG…LSIN, AYLS…PVIG, WAFY…FFLL, FVGA…INFG, NSGT…AFAV, MLLF…IYFI, ALDS…TILV, FGYY…ANVF, GFEA…YAVI, IMIA…AVFI, and AKAF…SLGF.

The protein belongs to the major facilitator superfamily. TCR/Tet family.

The protein localises to the cell membrane. Functionally, MFS-type transporter; part of the gene cluster that mediates the biosynthesis of phomenoic acid, a long chain aliphatic carboxylic acid that does not appear to be essential for pathogenicity but may play a role in allowing to outcompete other fungi in the environmental niche via its antifungal properties. Is probably involved in the efflux of phomenoic acid. This Leptosphaeria maculans (strain JN3 / isolate v23.1.3 / race Av1-4-5-6-7-8) (Blackleg fungus) protein is Phomenoic acid biosynthesis cluster MFS-type transporter.